The sequence spans 788 residues: Protein translocase subunit SecA 2 (788 aa).

ATP contacts are provided by residues glutamine 86, 104 to 108 (GEGKT), and aspartate 493.

The protein belongs to the SecA family. Monomer and homodimer. Part of the essential Sec protein translocation apparatus which comprises SecA, SecYEG and auxiliary proteins SecDF. Other proteins may also be involved.

It localises to the cell membrane. The protein localises to the cytoplasm. It carries out the reaction ATP + H2O + cellular proteinSide 1 = ADP + phosphate + cellular proteinSide 2.. Its function is as follows. Part of the Sec protein translocase complex. Interacts with the SecYEG preprotein conducting channel. Has a central role in coupling the hydrolysis of ATP to the transfer of proteins into and across the cell membrane, serving as an ATP-driven molecular motor driving the stepwise translocation of polypeptide chains across the membrane. The polypeptide is Protein translocase subunit SecA 2 (Bacillus cereus (strain ZK / E33L)).